A 486-amino-acid chain; its full sequence is Cardiolipin synthase A (486 aa).

2 helical membrane passes run 3-23 (TFYT…IAGV) and 38-58 (MAWL…YLSV). PLD phosphodiesterase domains follow at residues 219–246 (MDLR…VDPR) and 399–426 (EGGL…DMRS). Active-site residues include H224, K226, D231, H404, K406, and D411.

It belongs to the phospholipase D family. Cardiolipin synthase subfamily. ClsA sub-subfamily.

The protein resides in the cell inner membrane. It catalyses the reaction 2 a 1,2-diacyl-sn-glycero-3-phospho-(1'-sn-glycerol) = a cardiolipin + glycerol. Its function is as follows. Catalyzes the reversible phosphatidyl group transfer from one phosphatidylglycerol molecule to another to form cardiolipin (CL) (diphosphatidylglycerol) and glycerol. This chain is Cardiolipin synthase A, found in Cronobacter sakazakii (strain ATCC BAA-894) (Enterobacter sakazakii).